We begin with the raw amino-acid sequence, 152 residues long: Deoxyuridine 5'-triphosphate nucleotidohydrolase (152 aa).

Substrate-binding positions include 71-73 (RSG), N84, 88-90 (LID), and M98.

Belongs to the dUTPase family. Mg(2+) is required as a cofactor.

The catalysed reaction is dUTP + H2O = dUMP + diphosphate + H(+). It participates in pyrimidine metabolism; dUMP biosynthesis; dUMP from dCTP (dUTP route): step 2/2. Its function is as follows. This enzyme is involved in nucleotide metabolism: it produces dUMP, the immediate precursor of thymidine nucleotides and it decreases the intracellular concentration of dUTP so that uracil cannot be incorporated into DNA. The chain is Deoxyuridine 5'-triphosphate nucleotidohydrolase from Coxiella burnetii (strain RSA 331 / Henzerling II).